The sequence spans 1039 residues: Multidrug resistance protein MdtB (1039 aa).

The next 11 helical transmembrane spans lie at 15–37 (LFIMRPVATTLLMVAILLAGIIG), 345–362 (FELMMAIALVVMIIYLFL), 367–389 (ATIIPGVAVPLSLIGTFAVMVFL), 396–418 (LTLMALTIATGFVVDDAIVVIEN), 438–460 (GEIGFTIISLTFSLIAVLIPLLF), 472–494 (FAITLAVAILISAVVSLTLTPMM), 535–557 (HPWLTLSVALSTLLLSVLLWVFI), 866–888 (VWLIVAAVVAMYIVLGILYESFI), 908–930 (LMIAGSELDVIAIIGIILLIGIV), 967–989 (ILMTTLAALLGALPLMLSTGVGA), and 999–1021 (MVGGLIVSQVLTLFTTPVIYLLF).

The protein belongs to the resistance-nodulation-cell division (RND) (TC 2.A.6) family. MdtB subfamily. Part of a tripartite efflux system composed of MdtA, MdtB and MdtC. MdtB forms a heteromultimer with MdtC.

It is found in the cell inner membrane. This Shigella flexneri protein is Multidrug resistance protein MdtB.